Consider the following 865-residue polypeptide: Protein translocase subunit SecA (865 aa).

ATP contacts are provided by residues Gln-93, Gly-111 to Thr-115, and Asp-501. 4 residues coordinate Zn(2+): Cys-841, Cys-843, Cys-852, and Cys-853.

Belongs to the SecA family. Monomer and homodimer. Part of the essential Sec protein translocation apparatus which comprises SecA, SecYEG and auxiliary proteins SecDF-YajC and YidC. The cofactor is Zn(2+).

It localises to the cell inner membrane. It is found in the cytoplasm. It carries out the reaction ATP + H2O + cellular proteinSide 1 = ADP + phosphate + cellular proteinSide 2.. Functionally, part of the Sec protein translocase complex. Interacts with the SecYEG preprotein conducting channel. Has a central role in coupling the hydrolysis of ATP to the transfer of proteins into and across the cell membrane, serving as an ATP-driven molecular motor driving the stepwise translocation of polypeptide chains across the membrane. The polypeptide is Protein translocase subunit SecA (Helicobacter pylori (strain ATCC 700392 / 26695) (Campylobacter pylori)).